Here is a 272-residue protein sequence, read N- to C-terminus: MSPATVLDSILEGVRADVAAREALVGMTEIKAAAAAAPPPLDVMAALRQPGIGVIAEVKRASPSAGSLAPITDPAKLARAYEDGGARIISVLTEGRRFQGSLDDLDAVRAAVSIPLLRKDFVVQPYQIHEARAHGADMLLLIVAALDQSALVSMLDRTESLGMTALVEVHTEQEADRALKAGAKVIGVNARDLTTLEVDRDCFARIASGLPSNVIRIAESGVRGTNDLLAYAGAGADAVLVGEGLVKSGDPRAAVADLVTAGTHPSCPKPAR.

It belongs to the TrpC family.

It carries out the reaction 1-(2-carboxyphenylamino)-1-deoxy-D-ribulose 5-phosphate + H(+) = (1S,2R)-1-C-(indol-3-yl)glycerol 3-phosphate + CO2 + H2O. It functions in the pathway amino-acid biosynthesis; L-tryptophan biosynthesis; L-tryptophan from chorismate: step 4/5. The chain is Indole-3-glycerol phosphate synthase from Mycobacterium ulcerans (strain Agy99).